A 310-amino-acid chain; its full sequence is MTTKNIAIIGECMIELSQKGADLNRGFGGDTLNTAVYISRQVKPDALDVHYVTALGTDSFSSEMMASWQKEGVKTDLIQRLDNKLPGLYFIETDATGERTFYYWRNDAAARYWLESPDADTISQQLAQFDYIYLSGISLAILNQASRARLLTVLRACRANGGKVIFDNNYRPRLWQSKEETRQAYSDMLACTDIAFLTLDDEDMLWGELPVDEVLKRTHGAGVMEVVIKRGADACLVSIQGEALLEVPAIKLPKEKVVDTTAAGDSFSAGYLSVRLNGGSAQDAAKRGHLTASTVIQYRGAIIPLEAMPA.

Residues 29–33 (GDTLN), Tyr89, 103–105 (YWR), and Arg171 contribute to the substrate site. ATP is bound by residues 169 to 171 (NYR), 229 to 234 (KRGADA), and 262 to 265 (AAGD). Asp265 provides a ligand contact to substrate. The active-site Proton acceptor is Asp265.

The protein belongs to the carbohydrate kinase PfkB family.

It catalyses the reaction 2-dehydro-3-deoxy-D-gluconate + ATP = 2-dehydro-3-deoxy-6-phospho-D-gluconate + ADP + H(+). The protein operates within carbohydrate acid metabolism; 2-dehydro-3-deoxy-D-gluconate degradation; D-glyceraldehyde 3-phosphate and pyruvate from 2-dehydro-3-deoxy-D-gluconate: step 1/2. Catalyzes the phosphorylation of 2-keto-3-deoxygluconate (KDG) to produce 2-keto-3-deoxy-6-phosphogluconate (KDPG). This is 2-dehydro-3-deoxygluconokinase from Dickeya dadantii (strain 3937) (Erwinia chrysanthemi (strain 3937)).